We begin with the raw amino-acid sequence, 28 residues long: Cyclotide vodo I1 (28 aa).

Intrachain disulfides connect C4-C18, C8-C20, and C13-C25.

In terms of processing, this is a cyclic peptide. Contains 3 disulfide bonds.

Its function is as follows. Probably participates in a plant defense mechanism. In Viola odorata (Sweet violet), this protein is Cyclotide vodo I1.